We begin with the raw amino-acid sequence, 127 residues long: Small ribosomal subunit protein uS12m (127 aa).

This sequence belongs to the universal ribosomal protein uS12 family.

The protein resides in the mitochondrion. This chain is Small ribosomal subunit protein uS12m (RPS12), found in Acanthamoeba castellanii (Amoeba).